A 138-amino-acid polypeptide reads, in one-letter code: Small ribosomal subunit protein uS11c (138 aa).

The segment at 1 to 22 (MAKAIPKISSRRNGRIGSRKGA) is disordered. Basic residues predominate over residues 9 to 22 (SSRRNGRIGSRKGA).

This sequence belongs to the universal ribosomal protein uS11 family. Part of the 30S ribosomal subunit.

Its subcellular location is the plastid. The protein localises to the chloroplast. This Nicotiana tomentosiformis (Tobacco) protein is Small ribosomal subunit protein uS11c.